The sequence spans 185 residues: Prenylated Rab acceptor protein 1 (185 aa).

The Cytoplasmic segment spans residues Met1–Tyr78. A required for interaction with prenylated RAB3A and VAMP2 region spans residues Ala30–Phe54. 2 consecutive transmembrane segments (helical) span residues Val79–Pro94 and Met95–Leu112. Over Arg113–Gln131 the chain is Cytoplasmic. 2 helical membrane-spanning segments follow: residues Tyr132–Ala148 and Gly149–Ser165. Residues Ser165–Val185 form a required for interaction with GDI1 region. Over His166 to Val185 the chain is Cytoplasmic. The segment at Ala175 to Val185 is required for interaction with prenylated RAB3A and VAMP2. A homodimerization region spans residues Ala175–Val185.

The protein belongs to the PRA1 family. In terms of assembly, homodimer. Interacts with VAMP2 (synaptobrevin-2), GDI1, NRDG1 and PCLO. Interacts with prenylated Rab proteins (including RAB5 and RAB6), and with the members of the Ras superfamily HRAS, RHOA, TC21, and RAP1A.

The protein resides in the cell membrane. It is found in the cytoplasm. It localises to the golgi apparatus. Its subcellular location is the cytoplasmic vesicle. The protein localises to the secretory vesicle. The protein resides in the synaptic vesicle. In terms of biological role, general Rab protein regulator required for vesicle formation from the Golgi complex. May control vesicle docking and fusion by mediating the action of Rab GTPases to the SNARE complexes. In addition it inhibits the removal of Rab GTPases from the membrane by GDI1. The protein is Prenylated Rab acceptor protein 1 (Rabac1) of Mus musculus (Mouse).